The chain runs to 274 residues: Prolyl 4-hydroxylase 13 (274 aa).

The Cytoplasmic segment spans residues 1–10 (MRSYGKEKKL). A helical; Signal-anchor for type II membrane protein membrane pass occupies residues 11–31 (VFPYVFIACCFFLAIFGFCFF). Over 32–274 (NLFSQGISFS…TKWIRDQTYD (243 aa)) the chain is Lumenal. In terms of domain architecture, Fe2OG dioxygenase spans 151–270 (YYESFNILRY…KWVATKWIRD (120 aa)). Fe cation contacts are provided by H169 and D171. An N-linked (GlcNAc...) asparagine glycan is attached at N242. H251 lines the Fe cation pocket. Residue K261 coordinates 2-oxoglutarate.

This sequence belongs to the P4HA family. Requires Fe(2+) as cofactor. L-ascorbate is required as a cofactor. Expressed in epidermal root hair cells (trichoblasts) root hairless cells (atrichoblasts).

It is found in the endoplasmic reticulum membrane. It catalyses the reaction L-prolyl-[collagen] + 2-oxoglutarate + O2 = trans-4-hydroxy-L-prolyl-[collagen] + succinate + CO2. In terms of biological role, catalyzes the post-translational formation of 4-hydroxyproline in -Xaa-Pro-Gly- sequences in proline-rich peptide sequences of plant glycoproteins and other proteins. Hydroxyprolines are important constituent of many plant cell wall glycoproteins such as extensins, hydroxyproline-rich glycoproteins, lectins and arabinogalactan proteins. Possesses high affinity for leucine-rich repeat and proline-rich extensins of root cell walls that are essential for root hair development. Hydroxyprolines define the subsequent O-glycosylation sites by arabinosyltransferases which elongate the O-arabinosides on extensins. The sequence is that of Prolyl 4-hydroxylase 13 from Arabidopsis thaliana (Mouse-ear cress).